We begin with the raw amino-acid sequence, 569 residues long: Glucose-6-phosphate isomerase, cytosolic 1A (569 aa).

Glu360 (proton donor) is an active-site residue. Catalysis depends on residues His391 and Lys516.

The protein belongs to the GPI family. In terms of assembly, homodimer.

The protein resides in the cytoplasm. It carries out the reaction alpha-D-glucose 6-phosphate = beta-D-fructose 6-phosphate. The protein operates within carbohydrate degradation; glycolysis; D-glyceraldehyde 3-phosphate and glycerone phosphate from D-glucose: step 2/4. In Clarkia lewisii (Farewell-to-spring), this protein is Glucose-6-phosphate isomerase, cytosolic 1A (PGIC1-A).